Here is a 130-residue protein sequence, read N- to C-terminus: Gonadotropin subunit beta-1 (130 aa).

A signal peptide spans 1–18 (MRMRFVVMVILLPALMMS). Cystine bridges form between cysteine 26–cysteine 74, cysteine 40–cysteine 89, cysteine 51–cysteine 105, cysteine 55–cysteine 107, and cysteine 110–cysteine 117. The N-linked (GlcNAc...) asparagine glycan is linked to asparagine 30.

The protein belongs to the glycoprotein hormones subunit beta family. In terms of assembly, heterodimer of an alpha and a beta chain.

It localises to the secreted. Its function is as follows. Involved in gametogenesis and steroidogenesis. The sequence is that of Gonadotropin subunit beta-1 (cgba) from Carassius auratus (Goldfish).